A 544-amino-acid chain; its full sequence is MAKRIIYNENARRALERGIDILAEAVAVTLGPKGRNVVLEKKFGAPQIVNDGVTIAKEIELEDHIENTGVALIRQAASKTNDAAGDGTTTATVLAHAIVKEGLRNVAAGANAILLKRGIDKATGFLVDRIKEHARPVEDSKSIAQVGSISAGNDDEVGQMIAEAMDKVGKEGVISLEEGKSVTTELEITEGMRFDKGYISPYFATDPERMEAIFDEPFLLLTDKKIALVQDLVPVLEQVARAGRPLVIIAEDIEKEALATLVVNRLRGVLNVAAVKAPGFGDRRKAMLEDIAILTGGQLITEDAGLKLENTKLESLGKARRITITKDSTTIVAEGNDVAVKGRVEQIRRQMEETESSYDKEKLQERLAKLSGGVAVVKVGAATETEMKDKKLRLEDAINATKAAVEEGIVPGGGTTLAHLTPELEVWANSNLKDEELTGALIVARALPAPLKRIAENAGQNGAVIAERVKEKAFNVGFNAATNEFVDMFEAGIVDPAKVTRSALQNAASIAGMVLTTECIVVDKPEPKDNAPAGAGAGGGDFDY.

ATP contacts are provided by residues 29-32, 86-90, Gly413, 479-481, and Asp495; these read TLGP, DGTTT, and NAA. Residues 525–544 are disordered; it reads PEPKDNAPAGAGAGGGDFDY. The segment covering 535–544 has biased composition (gly residues); the sequence is AGAGGGDFDY.

Belongs to the chaperonin (HSP60) family. Forms a cylinder of 14 subunits composed of two heptameric rings stacked back-to-back. Interacts with the co-chaperonin GroES.

It localises to the cytoplasm. The enzyme catalyses ATP + H2O + a folded polypeptide = ADP + phosphate + an unfolded polypeptide.. In terms of biological role, together with its co-chaperonin GroES, plays an essential role in assisting protein folding. The GroEL-GroES system forms a nano-cage that allows encapsulation of the non-native substrate proteins and provides a physical environment optimized to promote and accelerate protein folding. The polypeptide is Chaperonin GroEL 1 (Nostoc sp. (strain PCC 7120 / SAG 25.82 / UTEX 2576)).